The primary structure comprises 418 residues: Gamma-glutamyl phosphate reductase (418 aa).

The protein belongs to the gamma-glutamyl phosphate reductase family.

The protein localises to the cytoplasm. The catalysed reaction is L-glutamate 5-semialdehyde + phosphate + NADP(+) = L-glutamyl 5-phosphate + NADPH + H(+). It participates in amino-acid biosynthesis; L-proline biosynthesis; L-glutamate 5-semialdehyde from L-glutamate: step 2/2. Catalyzes the NADPH-dependent reduction of L-glutamate 5-phosphate into L-glutamate 5-semialdehyde and phosphate. The product spontaneously undergoes cyclization to form 1-pyrroline-5-carboxylate. The polypeptide is Gamma-glutamyl phosphate reductase (Colwellia psychrerythraea (strain 34H / ATCC BAA-681) (Vibrio psychroerythus)).